A 200-amino-acid chain; its full sequence is ATP-dependent Clp protease proteolytic subunit (200 aa).

Catalysis depends on Ser-104, which acts as the Nucleophile. His-129 is a catalytic residue.

It belongs to the peptidase S14 family. As to quaternary structure, fourteen ClpP subunits assemble into 2 heptameric rings which stack back to back to give a disk-like structure with a central cavity, resembling the structure of eukaryotic proteasomes.

It is found in the cytoplasm. The enzyme catalyses Hydrolysis of proteins to small peptides in the presence of ATP and magnesium. alpha-casein is the usual test substrate. In the absence of ATP, only oligopeptides shorter than five residues are hydrolyzed (such as succinyl-Leu-Tyr-|-NHMec, and Leu-Tyr-Leu-|-Tyr-Trp, in which cleavage of the -Tyr-|-Leu- and -Tyr-|-Trp bonds also occurs).. Its function is as follows. Cleaves peptides in various proteins in a process that requires ATP hydrolysis. Has a chymotrypsin-like activity. Plays a major role in the degradation of misfolded proteins. The sequence is that of ATP-dependent Clp protease proteolytic subunit from Rubrobacter xylanophilus (strain DSM 9941 / JCM 11954 / NBRC 16129 / PRD-1).